A 397-amino-acid polypeptide reads, in one-letter code: UPF0761 membrane protein Kkor_1635 (397 aa).

6 consecutive transmembrane segments (helical) span residues 36–56 (MLAL…FPSF), 92–112 (NLSA…MRSI), 132–152 (ILAY…SLAA), 168–188 (ILTF…LYMV), 201–221 (IAAV…AIFV), and 237–257 (IPIF…GVIV).

The protein belongs to the UPF0761 family.

It is found in the cell inner membrane. This is UPF0761 membrane protein Kkor_1635 from Kangiella koreensis (strain DSM 16069 / JCM 12317 / KCTC 12182 / SW-125).